A 438-amino-acid chain; its full sequence is Exoglucanase 3 (438 aa).

The first 20 residues, 1–20 (MFKFAALLALASLVPGFVQA), serve as a signal peptide directing secretion. The 39-residue stretch at 21-59 (QSPVWGQCGGNGWTGPTTCASGSTCVKQNDFYSQCLPNN) folds into the CBM1 domain. 2 cysteine pairs are disulfide-bonded: Cys-28-Cys-45 and Cys-39-Cys-55. The segment at 57–90 (PNNQAPPSTTTQPGTTPPATTTSGGTGPTSGAGN) is disordered. The tract at residues 60–87 (QAPPSTTTQPGTTPPATTTSGGTGPTSG) is linker. The span at 61-79 (APPSTTTQPGTTPPATTTS) shows a compositional bias: low complexity. Residues 88–438 (AGNPYTGKTV…TLVANANPAL (351 aa)) are catalytic. 2 disulfides stabilise this stretch: Cys-170–Cys-229 and Cys-360–Cys-407. Asp-215 acts as the Proton donor in catalysis. Catalysis depends on Asp-393, which acts as the Nucleophile.

This sequence belongs to the glycosyl hydrolase 6 (cellulase B) family.

The catalysed reaction is Hydrolysis of (1-&gt;4)-beta-D-glucosidic linkages in cellulose and cellotetraose, releasing cellobiose from the non-reducing ends of the chains.. Functionally, shows enzymatic activity towards crystalline cellulose. At long reaction times. It is also able to degrade carboxymethyl cellulose and barley B-glucan. The protein is Exoglucanase 3 (cel3) of Agaricus bisporus (White button mushroom).